The sequence spans 544 residues: Chaperonin GroEL (544 aa).

ATP-binding positions include 29 to 32 (TLGP), 86 to 90 (DGTTT), glycine 413, 476 to 478 (NAA), and aspartate 492.

It belongs to the chaperonin (HSP60) family. Forms a cylinder of 14 subunits composed of two heptameric rings stacked back-to-back. Interacts with the co-chaperonin GroES.

The protein localises to the cytoplasm. It catalyses the reaction ATP + H2O + a folded polypeptide = ADP + phosphate + an unfolded polypeptide.. Functionally, together with its co-chaperonin GroES, plays an essential role in assisting protein folding. The GroEL-GroES system forms a nano-cage that allows encapsulation of the non-native substrate proteins and provides a physical environment optimized to promote and accelerate protein folding. This chain is Chaperonin GroEL, found in Bacillus licheniformis (strain ATCC 14580 / DSM 13 / JCM 2505 / CCUG 7422 / NBRC 12200 / NCIMB 9375 / NCTC 10341 / NRRL NRS-1264 / Gibson 46).